The chain runs to 330 residues: Aspartate--ammonia ligase (330 aa).

This sequence belongs to the class-II aminoacyl-tRNA synthetase family. AsnA subfamily.

The protein localises to the cytoplasm. It catalyses the reaction L-aspartate + NH4(+) + ATP = L-asparagine + AMP + diphosphate + H(+). Its pathway is amino-acid biosynthesis; L-asparagine biosynthesis; L-asparagine from L-aspartate (ammonia route): step 1/1. This is Aspartate--ammonia ligase from Escherichia coli O8 (strain IAI1).